Consider the following 305-residue polypeptide: Cbb3-type cytochrome c oxidase subunit CcoP2 (305 aa).

Helical transmembrane passes span 4–24 (FWSWYVTLLSLGTIAALVWLL) and 57–77 (WWFMLFVGTVIFALGYLVLYP). 2 Cytochrome c domains span residues 130-209 (QALK…RSLS) and 219-300 (VDIE…YSLS). Heme c contacts are provided by C143, C146, H147, M186, C232, C235, H236, and M277.

Component of the cbb3-type cytochrome c oxidase at least composed of CcoN, CcoO, CcoQ and CcoP. It depends on heme c as a cofactor.

The protein resides in the cell inner membrane. Its pathway is energy metabolism; oxidative phosphorylation. Its function is as follows. C-type cytochrome. Part of the cbb3-type cytochrome c oxidase complex. CcoP subunit is required for transferring electrons from donor cytochrome c via its heme groups to CcoO subunit. From there, electrons are shuttled to the catalytic binuclear center of CcoN subunit where oxygen reduction takes place. The complex also functions as a proton pump. This chain is Cbb3-type cytochrome c oxidase subunit CcoP2, found in Stutzerimonas stutzeri (Pseudomonas stutzeri).